The primary structure comprises 166 residues: Biotin carboxyl carrier protein of acetyl-CoA carboxylase (166 aa).

Positions 61–70 are enriched in polar residues; sequence STASEASSPA. A disordered region spans residues 61-82; the sequence is STASEASSPASVKDVPVEEQPQ. Residues 90–166 enclose the Biotinyl-binding domain; it reads GDIVESPLVG…EFGQGLVRIK (77 aa). K132 is modified (N6-biotinyllysine).

Homodimer.

It participates in lipid metabolism; fatty acid biosynthesis. In terms of biological role, this protein is a component of the acetyl coenzyme A carboxylase complex; first, biotin carboxylase catalyzes the carboxylation of the carrier protein and then the transcarboxylase transfers the carboxyl group to form malonyl-CoA. The protein is Biotin carboxyl carrier protein of acetyl-CoA carboxylase of Streptococcus pyogenes serotype M6 (strain ATCC BAA-946 / MGAS10394).